The sequence spans 45 residues: Large ribosomal subunit protein bL34 (45 aa).

A disordered region spans residues 1 to 45 (MTKRTLGGTVRKQKRTSGFRARMRSHTGQNVIRARRKKGRHRLTV). Composition is skewed to basic residues over residues 11-25 (RKQKRTSGFRARMRS) and 33-45 (RARRKKGRHRLTV).

Belongs to the bacterial ribosomal protein bL34 family.

This is Large ribosomal subunit protein bL34 from Picosynechococcus sp. (strain ATCC 27264 / PCC 7002 / PR-6) (Agmenellum quadruplicatum).